A 325-amino-acid chain; its full sequence is Coiled-coil domain-containing protein 130 homolog (325 aa).

Residues 156–262 adopt a coiled-coil conformation; sequence LKLENKKLDI…KLKRELIKNE (107 aa).

It belongs to the CWC16 family.

The chain is Coiled-coil domain-containing protein 130 homolog from Dictyostelium discoideum (Social amoeba).